The sequence spans 168 residues: NADH dehydrogenase [ubiquinone] 1 alpha subcomplex assembly factor 2 (168 aa).

A disordered region spans residues 112–168 (GKETSEELLPSPTATQVKGHASAPYFGREEPSVAPTSTGKTFQPGSWTPEDGKRQSQ). Position 133 is a phosphoserine (Ser133). Over residues 145–157 (APTSTGKTFQPGS) the composition is skewed to polar residues.

This sequence belongs to the complex I NDUFA12 subunit family. As to quaternary structure, interacts with ARMC9.

The protein localises to the mitochondrion. In terms of biological role, acts as a molecular chaperone for mitochondrial complex I assembly. Complex I functions in the transfer of electrons from NADH to the respiratory chain. The immediate electron acceptor for the enzyme is believed to be ubiquinone. Is involved in the initial steps of cilia formation, including removal of CP110 from the mother centrioles, docking of membrane vesicles to the mother centrioles, and establishment of the transition zone. This chain is NADH dehydrogenase [ubiquinone] 1 alpha subcomplex assembly factor 2 (Ndufaf2), found in Mus musculus (Mouse).